The following is a 305-amino-acid chain: Olfactory receptor 5M11 (305 aa).

Residues 1–25 (MSNTNGSAITEFILLGLTDCPELQS) lie on the Extracellular side of the membrane. Residue N5 is glycosylated (N-linked (GlcNAc...) asparagine). Residues 26–46 (LLFVLFLVVYLVTLLGNLGMI) form a helical membrane-spanning segment. Over 47-54 (MLMRLDSR) the chain is Cytoplasmic. The helical transmembrane segment at 55-75 (LHTPMYFFLTNLAFVDLCYTS) threads the bilayer. The Extracellular segment spans residues 76–98 (NATPQMSTNIVSEKTISFAGCFT). C96 and C188 are oxidised to a cystine. A helical transmembrane segment spans residues 99-119 (QCYIFIALLLTEFYMLAAMAY). The Cytoplasmic segment spans residues 120-138 (DRYVAIYDPLRYSVKTSRR). Residues 139–159 (VCICLATFPYVYGFSDGLFQA) form a helical membrane-spanning segment. The Extracellular portion of the chain corresponds to 160-195 (ILTFRLTFCRSSVINHFYCADPPLIKLSCSDTYVKE). Residues 196-216 (HAMFISAGFNLSSSLTIVLVS) traverse the membrane as a helical segment. Residues 217–236 (YAFILAAILRIKSAEGRHKA) are Cytoplasmic-facing. A helical transmembrane segment spans residues 237-257 (FSTCGSHMMAVTLFYGTLFCM). The Extracellular segment spans residues 258 to 270 (YIRPPTDKTVEES). Residues 271–291 (KIIAVFYTFVSPVLNPLIYSL) form a helical membrane-spanning segment. The Cytoplasmic portion of the chain corresponds to 292 to 305 (RNKDVKQALKNVLR).

The protein belongs to the G-protein coupled receptor 1 family.

Its subcellular location is the cell membrane. Odorant receptor. This Homo sapiens (Human) protein is Olfactory receptor 5M11 (OR5M11).